Here is a 461-residue protein sequence, read N- to C-terminus: Cysteine--tRNA ligase (461 aa).

C29 lines the Zn(2+) pocket. The 'HIGH' region signature appears at M31 to H41. Zn(2+) contacts are provided by C213, H238, and E242. A 'KMSKS' region motif is present at residues K270–S274. K273 contributes to the ATP binding site.

The protein belongs to the class-I aminoacyl-tRNA synthetase family. Monomer. Requires Zn(2+) as cofactor.

Its subcellular location is the cytoplasm. The catalysed reaction is tRNA(Cys) + L-cysteine + ATP = L-cysteinyl-tRNA(Cys) + AMP + diphosphate. This Delftia acidovorans (strain DSM 14801 / SPH-1) protein is Cysteine--tRNA ligase.